The primary structure comprises 491 residues: Rab5 GDP/GTP exchange factor (491 aa).

Residues 1 to 74 (MSLKSERRGI…EEEAFASSQS (74 aa)) are interaction with ubiquitinated proteins. An A20-type zinc finger spans residues 13-47 (DQSDLLCKKGCGYYGNPAWQGFCSKCWREEYHKAR). Residues Cys19, Cys23, Cys35, and Cys38 each coordinate Zn(2+). The disordered stretch occupies residues 66–85 (EEAFASSQSSQGAQSLTFSK). The span at 69–84 (FASSQSSQGAQSLTFS) shows a compositional bias: low complexity. Phosphoserine occurs at positions 124 and 132. 2 positions are modified to N6-acetyllysine: Lys151 and Lys170. Residues 232–375 (EKKDLAIQKR…IEKLDAQSLN (144 aa)) form the VPS9 domain. 4 positions are modified to phosphoserine: Ser373, Ser377, Ser390, and Ser400. A disordered region spans residues 462–491 (PPNQPLAAIDSENVENDKLPPPLQPQVYAG).

Interacts with RGS14; the interaction is GTP-dependent. Heterodimer with RABEP1. The heterodimer binds RAB4A and RAB5A that have been activated by GTP-binding. Interacts with RAB21, and with 100-fold lower affinity also with RAB22. Binds TSC2, GGA1, GGA2, GGA3, AP1G1 and AP1G2. Interacts with ubiquitinated EGFR. In terms of processing, monoubiquitinated.

Its subcellular location is the cytoplasm. It localises to the early endosome. The protein resides in the recycling endosome. Its function is as follows. Rab effector protein acting as linker between gamma-adaptin, RAB4A or RAB5A. Involved in endocytic membrane fusion and membrane trafficking of recycling endosomes. Stimulates nucleotide exchange on RAB5A. Can act as a ubiquitin ligase. In Homo sapiens (Human), this protein is Rab5 GDP/GTP exchange factor (RABGEF1).